Here is a 225-residue protein sequence, read N- to C-terminus: Recoverin family protein DDB_G0274781 (225 aa).

Over residues 1–13 (MGNKQGKSPNNSK) the composition is skewed to low complexity. Positions 1–20 (MGNKQGKSPNNSKGGKKYKI) are disordered. The N-myristoyl glycine moiety is linked to residue Gly2. EF-hand domains follow at residues 78-113 (DNSP…LCKG), 114-149 (TAEE…AWIS), and 174-209 (MAQI…HPKI). 15 residues coordinate Ca(2+): Asp91, Asn93, Asp95, Thr97, Glu102, Asp127, Asp129, Asn131, Tyr133, Glu138, Asp187, Asn189, Asp191, Lys193, and Glu198.

It belongs to the recoverin family.

This chain is Recoverin family protein DDB_G0274781, found in Dictyostelium discoideum (Social amoeba).